We begin with the raw amino-acid sequence, 543 residues long: Thiamine transport system permease protein ThiP (543 aa).

The next 12 membrane-spanning stretches (helical) occupy residues 19 to 39 (VAGGLALAFLATLAGGALLAL), 64 to 84 (FTIWQAVASSLRSVLFAIPIA), 102 to 122 (LFALPLALPALVAVLGVTSIY), 142 to 162 (DIYGIAGILIAHIFFNMPLAV), 205 to 225 (GMIGLVFMLCVTSFTTVLTLG), 250 to 270 (AVALTFTQLALTLLILLILRL), 300 to 320 (IIVITLGFLYVALPIAGVVVS), 343 to 363 (LALGFSAALLAVFLSLALVAA), 379 to 399 (GASLILVMPPIVIGAGWFILL), 406 to 426 (FVMAPLMVVTVNAAMAMPFAV), 468 to 488 (GMAFAFAMALSLGDLGTIALF), and 510 to 530 (FDAAGLALILGVLCLALMMIA). The ABC transmembrane type-1 1 domain occupies 62–266 (ARFTIWQAVA…QLALTLLILL (205 aa)). One can recognise an ABC transmembrane type-1 2 domain in the interval 339–530 (IATSLALGFS…VLCLALMMIA (192 aa)).

It belongs to the binding-protein-dependent transport system permease family. CysTW subfamily. As to quaternary structure, the complex is composed of two ATP-binding proteins (ThiQ), two transmembrane proteins (ThiP) and a solute-binding protein (ThiB).

Its subcellular location is the cell inner membrane. Functionally, part of the ABC transporter complex ThiBPQ involved in thiamine import. Probably responsible for the translocation of the substrate across the membrane. The polypeptide is Thiamine transport system permease protein ThiP (thiP) (Brucella suis biovar 1 (strain 1330)).